We begin with the raw amino-acid sequence, 252 residues long: Probable transcriptional regulatory protein Kole_1935 (252 aa).

Belongs to the TACO1 family.

It localises to the cytoplasm. The sequence is that of Probable transcriptional regulatory protein Kole_1935 from Kosmotoga olearia (strain ATCC BAA-1733 / DSM 21960 / TBF 19.5.1).